The sequence spans 667 residues: UvrABC system protein B (667 aa).

In terms of domain architecture, Helicase ATP-binding spans 31-414 (KNFEAGAKAQ…EAEQTDIQVD (384 aa)). 44 to 51 (GATGTGKT) serves as a coordination point for ATP. The short motif at 97 to 120 (YYDYYQPEAYVPSSDTYIEKDSSI) is the Beta-hairpin element. The Helicase C-terminal domain occupies 435-597 (QIDDLVGEIN…ITPKTIIKPI (163 aa)). The UVR domain occupies 630–665 (LEMVERLSEQMRLAAKKLDFEQAATLRDTILELKSE).

Belongs to the UvrB family. In terms of assembly, forms a heterotetramer with UvrA during the search for lesions. Interacts with UvrC in an incision complex.

The protein resides in the cytoplasm. Functionally, the UvrABC repair system catalyzes the recognition and processing of DNA lesions. A damage recognition complex composed of 2 UvrA and 2 UvrB subunits scans DNA for abnormalities. Upon binding of the UvrA(2)B(2) complex to a putative damaged site, the DNA wraps around one UvrB monomer. DNA wrap is dependent on ATP binding by UvrB and probably causes local melting of the DNA helix, facilitating insertion of UvrB beta-hairpin between the DNA strands. Then UvrB probes one DNA strand for the presence of a lesion. If a lesion is found the UvrA subunits dissociate and the UvrB-DNA preincision complex is formed. This complex is subsequently bound by UvrC and the second UvrB is released. If no lesion is found, the DNA wraps around the other UvrB subunit that will check the other stand for damage. The chain is UvrABC system protein B from Latilactobacillus sakei subsp. sakei (strain 23K) (Lactobacillus sakei subsp. sakei).